Here is a 155-residue protein sequence, read N- to C-terminus: Endoribonuclease YbeY (155 aa).

Zn(2+)-binding residues include histidine 115, histidine 119, and histidine 125.

This sequence belongs to the endoribonuclease YbeY family. It depends on Zn(2+) as a cofactor.

It is found in the cytoplasm. Functionally, single strand-specific metallo-endoribonuclease involved in late-stage 70S ribosome quality control and in maturation of the 3' terminus of the 16S rRNA. The sequence is that of Endoribonuclease YbeY from Polynucleobacter asymbioticus (strain DSM 18221 / CIP 109841 / QLW-P1DMWA-1) (Polynucleobacter necessarius subsp. asymbioticus).